Reading from the N-terminus, the 305-residue chain is uncharacterized protein (305 aa).

The span at 1 to 10 (MLWAQRKKRK) shows a compositional bias: basic residues. The tract at residues 1–30 (MLWAQRKKRKATTETTEDKPAESHRPNDSW) is disordered. Basic and acidic residues predominate over residues 16–27 (TEDKPAESHRPN). S39 bears the Phosphoserine mark. Residues 92–101 (QKISGTSVSK) are compositionally biased toward polar residues. The segment at 92–114 (QKISGTSVSKEMQRESGKSPSME) is disordered. At S158 the chain carries Phosphoserine. Positions 197 to 208 (SHHGNQSHQNHN) are enriched in low complexity. The interval 197 to 305 (SHHGNQSHQN…VNRRNQIYDS (109 aa)) is disordered. Polar residues-rich tracts occupy residues 209 to 221 (TYPCHQNNQSRSV) and 231 to 244 (LSHQGYPSYSSHQN). Over residues 247–293 (GHPSQQGHSSHSNQQGHLGLSSQQGHPSQSSHQSHQGQPGHPNHQSH) the composition is skewed to low complexity. Positions 294–305 (SLVNRRNQIYDS) are enriched in polar residues.

This is an uncharacterized protein from Rattus norvegicus (Rat).